A 375-amino-acid polypeptide reads, in one-letter code: Peroxisomal targeting signal 2 receptor (375 aa).

WD repeat units follow at residues 58–89, 102–133, 172–203, 218–249, 281–312, and 340–372; these read LTQD…RLFD, EHER…KIWS, KNRN…SLFD, HSGL…RIWD, AHGL…RIWR, and QHSE…FVWN.

This sequence belongs to the WD repeat peroxin-7 family. As to quaternary structure, interacts with PEX21.

It localises to the cytoplasm. It is found in the cytosol. The protein localises to the peroxisome matrix. In terms of biological role, receptor required for the peroxisomal import of proteins containing a C-terminal PTS2-type peroxisomal targeting signal, such as 3-oxoacyl-CoA thiolase. Specifically binds to cargo proteins containing a PTS2 peroxisomal targeting signal in the cytosol. Cargo protein-binding triggers interaction with PEX21 and formation of a ternary complex composed of PEX21 and PEX7 along with PTS2-containing cargo proteins, which is tranlocated into peroxisomes by passing through the PEX13-PEX14 docking complex. This Saccharomyces cerevisiae (strain ATCC 204508 / S288c) (Baker's yeast) protein is Peroxisomal targeting signal 2 receptor.